The sequence spans 119 residues: Thioredoxin H4 (119 aa).

The 114-residue stretch at 2–115 (AAEEGQVIGC…LQAKIVKHTG (114 aa)) folds into the Thioredoxin domain. Residues Cys-40 and Cys-43 each act as nucleophile in the active site. Cys-40 and Cys-43 form a disulfide bridge.

Belongs to the thioredoxin family. Plant H-type subfamily. In terms of assembly, interacts with MDH1.

It is found in the cytoplasm. In terms of biological role, thiol-disulfide oxidoreductase probably involved in the redox regulation of a number of cytosolic enzymes. Possesses insulin disulfide bonds reducing activity. This is Thioredoxin H4 (TRX4) from Arabidopsis thaliana (Mouse-ear cress).